Here is a 1044-residue protein sequence, read N- to C-terminus: Isoleucine--tRNA ligase (1044 aa).

The 'HIGH' region signature appears at 48–58; sequence PFATGLPHFGH. A 'KMSKS' region motif is present at residues 594-598; that stretch reads KMSKS. Lys-597 contacts ATP.

The protein belongs to the class-I aminoacyl-tRNA synthetase family. IleS type 2 subfamily. As to quaternary structure, monomer. Requires Zn(2+) as cofactor.

Its subcellular location is the cytoplasm. It catalyses the reaction tRNA(Ile) + L-isoleucine + ATP = L-isoleucyl-tRNA(Ile) + AMP + diphosphate. Catalyzes the attachment of isoleucine to tRNA(Ile). As IleRS can inadvertently accommodate and process structurally similar amino acids such as valine, to avoid such errors it has two additional distinct tRNA(Ile)-dependent editing activities. One activity is designated as 'pretransfer' editing and involves the hydrolysis of activated Val-AMP. The other activity is designated 'posttransfer' editing and involves deacylation of mischarged Val-tRNA(Ile). The chain is Isoleucine--tRNA ligase from Borrelia hermsii (strain HS1 / DAH).